Here is a 503-residue protein sequence, read N- to C-terminus: MEFSVKSGSPEKQRSACIVVGVFEPRRLSPIAEQLDKISDGYISALLRRGELEGKPGQTLLLHHVPNVLSERILLIGCGKERELDERQYKQVIQKTINTLNDTGSMEAVCFLTELHVKGRNNYWKVRQAVETAKETLYSFDQLKTNKSEPRRPLRKMVFNVPTRRELTSGERAIQHGLAIAAGIKAAKDLGNMPPNICNAAYLASQARQLADSYSKNVITRVIGEQQMRELGMNAYLAVGHGSQNESLMSVIEYKGNPSEDARPIVLVGKGLTFDSGGISIKPSEGMDEMKYDMCGAAAVYGVMRMVAELQLPINVIGVLAGCENMPGGRAYRPGDVLTTMSGQTVEVLNTDAEGRLVLCDVLTYVERFEPEAVIDVATLTGACVIALGHHITGLMSNHNPLAHELIGASEQAGDRAWRLPLGDEFQEQLESNFADMANIGGRPGGAITAGCFLSRFTRKYNWAHLDIAGTAWRSGKAKGATGRPVALLSQFLLNRAGFNGEE.

Lys270 and Asp275 together coordinate Mn(2+). Lys282 is a catalytic residue. Asp293, Asp352, and Glu354 together coordinate Mn(2+). Arg356 is a catalytic residue.

Belongs to the peptidase M17 family. It depends on Mn(2+) as a cofactor.

The protein localises to the cytoplasm. It carries out the reaction Release of an N-terminal amino acid, Xaa-|-Yaa-, in which Xaa is preferably Leu, but may be other amino acids including Pro although not Arg or Lys, and Yaa may be Pro. Amino acid amides and methyl esters are also readily hydrolyzed, but rates on arylamides are exceedingly low.. The catalysed reaction is Release of an N-terminal amino acid, preferentially leucine, but not glutamic or aspartic acids.. Its function is as follows. Presumably involved in the processing and regular turnover of intracellular proteins. Catalyzes the removal of unsubstituted N-terminal amino acids from various peptides. The protein is Probable cytosol aminopeptidase of Salmonella agona (strain SL483).